The sequence spans 445 residues: MASLPGIDEHTTSEELITGDNEWHKLVIPKGSDWQIDLKAEGKLIVKVNSGIVEIFGTELAVDDEYTFQNWKFPIYAVEETELLWKCPDLTTNTITVKPNHTMKYIYNLHFMLEKIRMSNFEGPRVVIVGGSQTGKTSLSRTLCSYALKFNAYQPLYINLDPQQPIFTVPGCISATPISDILDAQLPTWGQSLTSGATLLHNKQPMVKNFGLERINENKDLYLECISQLGQVVGQRLHLDPQVRRSGCIVDTPSISQLDENLAELHHIIEKLNVNIMLVLCSETDPLWEKVKKTFGPELGNNNIFFIPKLDGVSAVDDVYKRSLQRTSIREYFYGSLDTALSPYAIGVDYEDLTIWKPSNVFDNEVGRVELFPVTITPSNLQHAIIAITFAERRADQATVIKSPILGFALITEVNEKRRKLRVLLPVPGRLPSKAMILTSYRYLE.

Residues Asp-33, Lys-72, and Gln-133 to Ser-138 contribute to the ATP site.

Belongs to the Clp1 family. Clp1 subfamily. In terms of assembly, component of the cleavage factor IA (CF IA) complex, which is a heterohexameric complex with 2:2:1:1 stoichiometry of RNA14, RNA15, PCF11 and CLP1. It contains 2 copies of an RNA14-RNA15 dimer and 1 copy of CLP1-PCF11. The complex interacts with the cleavage factor HRB1/CF IB to form the cleavage factor I (CF I) complex, and binds to RNA. Interacts directly with PCF11. Interacts with the CPF components CFT1, PTA1, PFS2, YSH1 and SSU72.

It is found in the nucleus. In terms of biological role, component of the cleavage factor IA (CF IA) complex, which is involved in the endonucleolytic cleavage during polyadenylation-dependent pre-mRNA 3'-end formation. Associates with HRB1/CF IB to form the cleavage factor I (CF I) complex. CF I is required for correct positioning of a larger protein complex, the cleavage and polyadenylation factor (CPF) complex, which contains the catalytic subunits executing mRNA cleavage and polyadenylation. CLP1 mediates interactions between CF IA and CPF factors. CLP1 is also involved in maintaining the CF IA interaction with the C-terminal domain of RNA Pol II largest subunit via PCF11, which links pre-mRNA 3'-end processing to transcription termination. The protein is mRNA cleavage and polyadenylation factor CLP1 of Saccharomyces cerevisiae (strain YJM789) (Baker's yeast).